Consider the following 721-residue polypeptide: Pre-mRNA-splicing ATP-dependent RNA helicase PRP28 (721 aa).

Positions 12–134 are disordered; it reads KKAADTAAAK…SAEDIEATLL (123 aa). Basic and acidic residues predominate over residues 26–63; sequence PKAERERLAAEKAKKEEDDKKRKASEEEQKRKEEEQKW. The span at 64 to 77 shows a compositional bias: polar residues; it reads RSNGSSRPNESNGS. Over residues 88-104 the composition is skewed to basic and acidic residues; it reads NDGRDDRERDRDRDQGR. Residues 288–316 carry the Q motif motif; it reads RSWQESNLPQRLLNIVDDVGYKDPSPIQR. The region spanning 319-522 is the Helicase ATP-binding domain; it reads IPIALQARDL…KKYLRRPAIV (204 aa). ATP is bound at residue 332 to 339; sequence AVTGSGKT. The short motif at 445 to 448 is the DEAD box element; that stretch reads DEAD. Residues 533–696 enclose the Helicase C-terminal domain; it reads TVEQRVEFVS…KVPEELRRHE (164 aa). The tract at residues 685 to 721 is disordered; sequence ISKVPEELRRHEAAQSKPVRGAKKDKDEGSGKGNWQH. Positions 688–698 are enriched in basic and acidic residues; the sequence is VPEELRRHEAA.

This sequence belongs to the DEAD box helicase family. DDX23/PRP28 subfamily. In terms of assembly, component of the U5 snRNP complex.

It is found in the cytoplasm. It localises to the nucleus. The enzyme catalyses ATP + H2O = ADP + phosphate + H(+). In terms of biological role, ATP-dependent RNA helicase involved in mRNA splicing. May destabilize the U1/5'-splice site duplex to permit an effective competition for the 5'-splice site by the U6 snRNA, resulting in the switch between U1 and U6 at the 5'-splice site. May also act to unwind the U4/U6 base-pairing interaction in the U4/U6/U5 snRNP, facilitating the first covalent step of splicing. The chain is Pre-mRNA-splicing ATP-dependent RNA helicase PRP28 (PRP28) from Gibberella zeae (strain ATCC MYA-4620 / CBS 123657 / FGSC 9075 / NRRL 31084 / PH-1) (Wheat head blight fungus).